The chain runs to 101 residues: Putative pterin-4-alpha-carbinolamine dehydratase (101 aa).

This sequence belongs to the pterin-4-alpha-carbinolamine dehydratase family.

The catalysed reaction is (4aS,6R)-4a-hydroxy-L-erythro-5,6,7,8-tetrahydrobiopterin = (6R)-L-erythro-6,7-dihydrobiopterin + H2O. In Burkholderia mallei (strain ATCC 23344), this protein is Putative pterin-4-alpha-carbinolamine dehydratase.